Consider the following 2349-residue polypeptide: Reducing polyketide synthase hmp8 (2349 aa).

One can recognise a Ketosynthase family 3 (KS3) domain in the interval 9-435 (HVPVAIIGLA…GTNGHVVLEA (427 aa)). Active-site for beta-ketoacyl synthase activity residues include Cys182, His317, and His357. Positions 551-856 (FVFTGQGAQW…SHNGIKNVAY (306 aa)) are malonyl-CoA:ACP transacylase (MAT) domain. Positions 930–1066 (RSLIGAPVPM…GLVAIDYEES (137 aa)) are N-terminal hotdog fold. In terms of domain architecture, PKS/mFAS DH spans 930–1250 (RSLIGAPVPM…TSELDMDSGK (321 aa)). Positions 932–1244 (LIGAPVPMMA…SVKDFRTSEL (313 aa)) are dehydratase (DH) domain. His962 (proton acceptor; for dehydratase activity) is an active-site residue. The C-terminal hotdog fold stretch occupies residues 1094–1250 (PEHYAHDKFY…TSELDMDSGK (157 aa)). Asp1160 acts as the Proton donor; for dehydratase activity in catalysis. Residues 1641 to 1953 (GLLDTLKFVP…QGKHRGKMVL (313 aa)) are enoyl reductase (ER) domain. The ketoreductase (KR) domain stretch occupies residues 1977-2157 (ATYLFVGGLG…ISVNLGIMRD (181 aa)). A Carrier domain is found at 2267 to 2344 (EAAEIITDAL…SFAVKIAEKS (78 aa)). Ser2304 carries the post-translational modification O-(pantetheine 4'-phosphoryl)serine.

It functions in the pathway secondary metabolite biosynthesis. In terms of biological role, reducing polyketide synthase; part of the gene cluster that mediates the biosynthesis of hypothemycin, a resorcylic acid lactone (RAL) that irreversibly inhibits a subset of protein kinases with a conserved cysteine in the ATP binding site such as human ERK2. The first step is performed by both PKSs hmp3 and hmp8 and leads to the production of 7',8'-dehydrozearalenol (DHZ). The highly reducing PKS hpm8 synthesizes the reduced hexaketide (7S,11S,2E,8E)-7,11-dihydroxy-dodeca-2,8-dienoate, which is transferred downstream to the non-reducing PKS hpm3. Hpm3 then extends the reduced hexaketide to a nonaketide, after which regioselective cyclization and macrolactonization affords DHZ. The next step is the conversion of DHZ into aigialomycin C and is performed by the O-methyltransferase hmp5, the FAD-binding monooxygenase hmp7, and the cytochrome P450 monooxygenase hmp1. The wide substrate tolerance of the hmp5 and hmp7 implies that the reactions from DHZ to aigialomycin C can occur in any order. The steps from aigialomycin C to hypothemycin are less well established. The FAD-linked oxidoreductase hmp9 presumably catalyzes oxidation of the C-6' hydroxyl to a ketone. The timing of this oxidation is important, since the resulting enone functional group is a Michael acceptor that can react spontaneously with glutathione, an abundant metabolite in fungal cells. The glutathione S-transferase hmp2 catalyzes cis-trans isomerization of the 7',8' double bond with equilibrium favoring the trans isomer. The hpm6-encoded transporter might preferentially pump hypothemycin out of the cell relative to the trans isomer aigialomycin A. The cis-to-trans isomerization may be coupled with C-4' hydroxylation, since all known hypothemycin analogs containing the enone functional group also have hydroxyl groups at both C-4' and C-5'. This is Reducing polyketide synthase hmp8 from Hypomyces subiculosus (Nectria subiculosa).